An 801-amino-acid polypeptide reads, in one-letter code: Protein 4.1 (801 aa).

The interval 1–187 (MTTEKGLLAE…GESKASHKVV (187 aa)) is disordered. Residues 45 to 58 (EQSQESPSTTSPST) show a composition bias toward low complexity. The segment covering 88–107 (SDEKEVELLGEKGQDQKDVD) has biased composition (basic and acidic residues). Positions 108-117 (EGLGEQLEDD) are enriched in acidic residues. The span at 141–151 (SLSSAETQPAQ) shows a compositional bias: polar residues. Acidic residues predominate over residues 154–166 (QKEDQDPEADCED). Residues 167–182 (VEGKEPIKKPEGESKA) are compositionally biased toward basic and acidic residues. The 282-residue stretch at 193–474 (MRCKVTLLDD…EHHTFFRLTS (282 aa)) folds into the FERM domain. The hydrophilic stretch occupies residues 477-587 (SIPKHRFLSL…GMPNQRESPK (111 aa)). Positions 516 to 613 (RTGSKRASRS…DKVKDLEKTQ (98 aa)) are disordered. Positions 563-577 (RVEEMPKKTEEKPKE) are enriched in basic and acidic residues. Positions 588–651 (DVKATQQDSP…WDKRLSTHSP (64 aa)) are spectrin--actin-binding. The segment covering 591–601 (ATQQDSPSPTV) has biased composition (polar residues). Basic and acidic residues predominate over residues 604-613 (DKVKDLEKTQ). The C-terminal (CTD) stretch occupies residues 653–801 (RTLSFNGQVQ…GVVHQETEIA (149 aa)).

Binds with a high affinity to glycophorin and with lower affinity to band III protein. Associates with the nuclear mitotic apparatus. Binds calmodulin. In terms of processing, phosphorylated at multiple sites by different protein kinases and each phosphorylation event selectively modulates the protein's functions. As to expression, found exclusively in photoreceptors following the terminal mitosis of retinal neurons. When retinal synaptogenesis is complete, protein 4.1 is also expressed in the inner retina. In adult amphibian retinas, protein 4.1 is detected in photoreceptors, bipolar cells, and ganglion cell axons.

The protein resides in the nucleus. It is found in the cytoplasm. The protein localises to the cytoskeleton. It localises to the cell cortex. Its function is as follows. Protein 4.1 is a major structural element of the erythrocyte membrane skeleton. It plays a key role in regulating membrane physical properties of mechanical stability and deformability by stabilizing spectrin-actin interaction. May be required for dynein-dynactin complex and NUMA1 recruitment at the mitotic cell cortex during anaphase. This is Protein 4.1 from Xenopus laevis (African clawed frog).